We begin with the raw amino-acid sequence, 260 residues long: Shikimate dehydrogenase (NADP(+)) (260 aa).

Shikimate-binding positions include 14-16 and T60; that span reads SAS. The active-site Proton acceptor is the K64. Shikimate is bound by residues N85 and D100. Residues 121–125, 145–150, and F201 each bind NADP(+); these read GAGGA and NRTYER. Residue Y203 coordinates shikimate. G225 contacts NADP(+).

The protein belongs to the shikimate dehydrogenase family. Homodimer.

It catalyses the reaction shikimate + NADP(+) = 3-dehydroshikimate + NADPH + H(+). It functions in the pathway metabolic intermediate biosynthesis; chorismate biosynthesis; chorismate from D-erythrose 4-phosphate and phosphoenolpyruvate: step 4/7. In terms of biological role, involved in the biosynthesis of the chorismate, which leads to the biosynthesis of aromatic amino acids. Catalyzes the reversible NADPH linked reduction of 3-dehydroshikimate (DHSA) to yield shikimate (SA). This Pyrobaculum neutrophilum (strain DSM 2338 / JCM 9278 / NBRC 100436 / V24Sta) (Thermoproteus neutrophilus) protein is Shikimate dehydrogenase (NADP(+)).